We begin with the raw amino-acid sequence, 307 residues long: Methionyl-tRNA formyltransferase (307 aa).

108–111 is a binding site for (6S)-5,6,7,8-tetrahydrofolate; sequence SLLP.

It belongs to the Fmt family.

The enzyme catalyses L-methionyl-tRNA(fMet) + (6R)-10-formyltetrahydrofolate = N-formyl-L-methionyl-tRNA(fMet) + (6S)-5,6,7,8-tetrahydrofolate + H(+). Functionally, attaches a formyl group to the free amino group of methionyl-tRNA(fMet). The formyl group appears to play a dual role in the initiator identity of N-formylmethionyl-tRNA by promoting its recognition by IF2 and preventing the misappropriation of this tRNA by the elongation apparatus. In Xanthomonas euvesicatoria pv. vesicatoria (strain 85-10) (Xanthomonas campestris pv. vesicatoria), this protein is Methionyl-tRNA formyltransferase.